Consider the following 274-residue polypeptide: Oxidoreductase stcQ (274 aa).

It belongs to the avfA family.

It functions in the pathway mycotoxin biosynthesis; sterigmatocystin biosynthesis. Oxidoreductase; part of the gene cluster that mediates the biosynthesis of sterigmatocystin (ST), a polyketide-derived furanocoumarin which is part of the most toxic and carcinogenic compounds among the known mycotoxins. The first step in the biosynthesis of sterigmatocystin is the production of hexanoate by the fatty acid synthase (FAS) units stcJ and stcK. The polyketide backbone is assembled by the non-reducing polyketide synthase stcA by condensation of the starter hexanoyl-CoA and 7 malonyl-CoA extender units followed by cyclization and release of norsolorinic acid. Norsolorinic acid is the first stable intermediate in the biosynthesis of sterigmatocystin and is converted into averantin (AVN) by the ketoreductase stcE which reduces the hexanoate ketone to an alcohol. Averantin is then oxidized into 5'-hydroxyaverantin (HAVN) by the cytochrome P450 monooxygenase stcF. 5'-hydroxyaverantin is further converted to 5'-oxyaverantin (OAVN) by the 5'-hydroxyaverantin dehydrogenase stcG. The next step is the conversion of OAVN into averufin (AVF) which is catalyzed by a yet to be identified enzyme. The cytochrome P450 monooxygenase stcB and the flavin-binding monooxygenase stcW are both required for the conversion of averufin to 1-hydroxyversicolorone. The esterase stcI probably catalyzes the formation of versiconal hemiacetal acetate from 1-hydroxyversicolorone. The oxydoreductase stcN then probably catalyzes the biosynthetic step from versiconal to versicolorin B (VERB). The next step is performed by the versicolorin B desaturase stcL to produce versicolorin A (VERA). The ketoreductase stcU and the cytochrome P450 monooxygenase stcS are involved in the conversion of versicolorin A to demethylsterigmatocystin. The Baeyer-Villiger oxidas stcQ and the reductase stcR might be involved in the biosynthetic step from versicolorin A to demethylsterigmatocystin. The final step in the biosynthesis of sterigmatocystin is the methylation of demethylsterigmatocystin catalyzed by the methyltransferase stcP. The sequence is that of Oxidoreductase stcQ from Emericella nidulans (strain FGSC A4 / ATCC 38163 / CBS 112.46 / NRRL 194 / M139) (Aspergillus nidulans).